The sequence spans 169 residues: Protein-export protein SecB (169 aa).

Belongs to the SecB family. As to quaternary structure, homotetramer, a dimer of dimers. One homotetramer interacts with 1 SecA dimer.

Its subcellular location is the cytoplasm. Functionally, one of the proteins required for the normal export of preproteins out of the cell cytoplasm. It is a molecular chaperone that binds to a subset of precursor proteins, maintaining them in a translocation-competent state. It also specifically binds to its receptor SecA. The polypeptide is Protein-export protein SecB (Alteromonas mediterranea (strain DSM 17117 / CIP 110805 / LMG 28347 / Deep ecotype)).